The primary structure comprises 473 residues: Chromosomal replication initiator protein DnaA (473 aa).

The interval 1–87 (MADGEESISV…LAVTTFAIVV (87 aa)) is domain I, interacts with DnaA modulators. The interval 87–132 (VNPEIQQESLSTVGEPEPTPAPYLDVATFTVAPPAEITAPPRNGDT) is domain II. The interval 133 to 349 (RLNSKYSFDN…GTLIRVTAFA (217 aa)) is domain III, AAA+ region. Positions 177, 179, 180, and 181 each coordinate ATP. Residues 350 to 473 (SLNRTPVDMP…LTSRIKQNHR (124 aa)) are domain IV, binds dsDNA.

The protein belongs to the DnaA family. In terms of assembly, oligomerizes as a right-handed, spiral filament on DNA at oriC.

It is found in the cytoplasm. Plays an essential role in the initiation and regulation of chromosomal replication. ATP-DnaA binds to the origin of replication (oriC) to initiate formation of the DNA replication initiation complex once per cell cycle. Binds the DnaA box (a 9 base pair repeat at the origin) and separates the double-stranded (ds)DNA. Forms a right-handed helical filament on oriC DNA; dsDNA binds to the exterior of the filament while single-stranded (ss)DNA is stabiized in the filament's interior. The ATP-DnaA-oriC complex binds and stabilizes one strand of the AT-rich DNA unwinding element (DUE), permitting loading of DNA polymerase. After initiation quickly degrades to an ADP-DnaA complex that is not apt for DNA replication. Binds acidic phospholipids. In Leifsonia xyli subsp. xyli (strain CTCB07), this protein is Chromosomal replication initiator protein DnaA.